A 446-amino-acid polypeptide reads, in one-letter code: Methylenetetrahydrofolate--tRNA-(uracil-5-)-methyltransferase TrmFO (446 aa).

8–13 (GAGLAG) serves as a coordination point for FAD.

It belongs to the MnmG family. TrmFO subfamily. FAD serves as cofactor.

The protein resides in the cytoplasm. It catalyses the reaction uridine(54) in tRNA + (6R)-5,10-methylene-5,6,7,8-tetrahydrofolate + NADH + H(+) = 5-methyluridine(54) in tRNA + (6S)-5,6,7,8-tetrahydrofolate + NAD(+). The catalysed reaction is uridine(54) in tRNA + (6R)-5,10-methylene-5,6,7,8-tetrahydrofolate + NADPH + H(+) = 5-methyluridine(54) in tRNA + (6S)-5,6,7,8-tetrahydrofolate + NADP(+). Catalyzes the folate-dependent formation of 5-methyl-uridine at position 54 (M-5-U54) in all tRNAs. This Paracoccus denitrificans (strain Pd 1222) protein is Methylenetetrahydrofolate--tRNA-(uracil-5-)-methyltransferase TrmFO.